Consider the following 71-residue polypeptide: 26S proteasome complex subunit rpn15 (71 aa).

Residues 1–38 (MSRAALPSLENLEDDDEFEDFATENWPMKDTELDTGDD) are disordered. The segment covering 11 to 22 (NLEDDDEFEDFA) has biased composition (acidic residues). Residues 16–25 (DEFEDFATEN) form a UBS-II region. A UBS-I region spans residues 38–49 (DTLWENNWDDED).

The protein belongs to the DSS1/SEM1 family. Interacts with mlo3, rae1, nup98/nup189 and nup146. Interacts with rad24. Interacts (via UBSs) with ubiquitin (ubi3/ubi5).

The protein resides in the cytoplasm. Its subcellular location is the nucleus. Its function is as follows. Versatile protein that might stabilize multiple protein complexes involved in diverse pathways. Subunit of the 26S proteasome which plays a role in ubiquitin-dependent proteolysis. Acts as a ubiquitin receptor of the 26S proteasome, by interacting with ubiquitin chains linked by 'Lys-63' and 'Lys-48'. Involved in nuclear export of specific sets of mRNAs. Links the mRNA adapter mlo3 to rae1 for targeting mRNA-protein complex to the proteins of the nucleoporin complex (NPC). Involved in recombinational repair of DNA. Plays a critical role in linking repair and checkpoint factors to damaged DNA sites by specifically recruiting rad24 and cdc25 to the DSBs. The chain is 26S proteasome complex subunit rpn15 (rpn15) from Schizosaccharomyces pombe (strain 972 / ATCC 24843) (Fission yeast).